Here is a 408-residue protein sequence, read N- to C-terminus: MIRYISAMPSPEWEHETPRTLALLGSTGSIGTSALRVVEAHPHRFRVVALAGARNVEKLAAQAARWRPEHLGVLDAAGAAKLRDLLPAGYAPHIHIGPEGYATMATLPEAGTVLSAQVGAAGLRATEAAARHGKVICLANKESLVLAGDIIRRHCAGSGAVILPVDSEHNAIFQALQGHDPASVRRIILTASGGPFRGRSREDLAAVSCRDALAHPNWDMGAKITIDSATLMNKGLEVIEACHLYGVGIDDVGVVVHPQSIVHSLVEYEDGSQIAHLGTPDMRIAIAYCLTWPGVVDAGVPRLDLVKAGSLTFEEPDLHSFPCLELARRAYREGRGMPVVLNAANEVAVSLFLSDRIRFLDIPDIIARALDMHDGTTPHDIEGIEALDEATRRTVYERAGHSNTDGMA.

Positions 27, 28, 29, 30, 53, 54, 55, and 140 each coordinate NADPH. K141 serves as a coordination point for 1-deoxy-D-xylulose 5-phosphate. Residue E142 coordinates NADPH. D166 serves as a coordination point for Mn(2+). Residues S167, E168, S192, and H215 each coordinate 1-deoxy-D-xylulose 5-phosphate. E168 is a Mn(2+) binding site. G221 provides a ligand contact to NADPH. 4 residues coordinate 1-deoxy-D-xylulose 5-phosphate: S228, N233, K234, and E237. E237 lines the Mn(2+) pocket.

It belongs to the DXR family. The cofactor is Mg(2+). It depends on Mn(2+) as a cofactor.

It carries out the reaction 2-C-methyl-D-erythritol 4-phosphate + NADP(+) = 1-deoxy-D-xylulose 5-phosphate + NADPH + H(+). It participates in isoprenoid biosynthesis; isopentenyl diphosphate biosynthesis via DXP pathway; isopentenyl diphosphate from 1-deoxy-D-xylulose 5-phosphate: step 1/6. Its function is as follows. Catalyzes the NADPH-dependent rearrangement and reduction of 1-deoxy-D-xylulose-5-phosphate (DXP) to 2-C-methyl-D-erythritol 4-phosphate (MEP). The protein is 1-deoxy-D-xylulose 5-phosphate reductoisomerase of Nitratidesulfovibrio vulgaris (strain DP4) (Desulfovibrio vulgaris).